Reading from the N-terminus, the 396-residue chain is Elongation factor Tu (396 aa).

Residues 10–206 form the tr-type G domain; sequence KPHCNIGTIG…AVDSYIPQPE (197 aa). The interval 19–26 is G1; sequence GHVDHGKT. 19–26 contacts GTP; it reads GHVDHGKT. Mg(2+) is bound at residue threonine 26. The segment at 60–64 is G2; sequence GITIS. The G3 stretch occupies residues 81-84; it reads DCPG. GTP-binding positions include 81–85 and 136–139; these read DCPGH and NKCD. A G4 region spans residues 136-139; sequence NKCD. The segment at 174 to 176 is G5; sequence SAL.

The protein belongs to the TRAFAC class translation factor GTPase superfamily. Classic translation factor GTPase family. EF-Tu/EF-1A subfamily. In terms of assembly, monomer.

Its subcellular location is the cytoplasm. It catalyses the reaction GTP + H2O = GDP + phosphate + H(+). Functionally, GTP hydrolase that promotes the GTP-dependent binding of aminoacyl-tRNA to the A-site of ribosomes during protein biosynthesis. The sequence is that of Elongation factor Tu from Rhodopseudomonas palustris (strain BisA53).